The chain runs to 429 residues: Enolase (429 aa).

Residue Q165 participates in (2R)-2-phosphoglycerate binding. Catalysis depends on E207, which acts as the Proton donor. The Mg(2+) site is built by D244, E287, and D314. 4 residues coordinate (2R)-2-phosphoglycerate: K339, R368, S369, and K390. Catalysis depends on K339, which acts as the Proton acceptor.

The protein belongs to the enolase family. The cofactor is Mg(2+).

Its subcellular location is the cytoplasm. The protein resides in the secreted. It localises to the cell surface. It carries out the reaction (2R)-2-phosphoglycerate = phosphoenolpyruvate + H2O. The protein operates within carbohydrate degradation; glycolysis; pyruvate from D-glyceraldehyde 3-phosphate: step 4/5. Its function is as follows. Catalyzes the reversible conversion of 2-phosphoglycerate (2-PG) into phosphoenolpyruvate (PEP). It is essential for the degradation of carbohydrates via glycolysis. The chain is Enolase from Roseiflexus castenholzii (strain DSM 13941 / HLO8).